Reading from the N-terminus, the 365-residue chain is Transmembrane protein 25 (365 aa).

The first 26 residues, M1–G26, serve as a signal peptide directing secretion. The Extracellular portion of the chain corresponds to E27–E232. An Ig-like domain is found at P30–I123. An intrachain disulfide couples C52 to C107. 4 N-linked (GlcNAc...) asparagine glycosylation sites follow: N106, N162, N192, and N205. The chain crosses the membrane as a helical span at residues V233–S253. Residues T254–L365 are Cytoplasmic-facing.

Interacts with GRIN2B. As to expression, expressed throughout the brain with higher levels within the hippocampus.

The protein resides in the late endosome. Its subcellular location is the lysosome. It is found in the cell membrane. It localises to the secreted. In neurons, modulates the degradation of NMDA receptor GRIN2B subunit. Plays a role in the regulation of neuronal excitability. The polypeptide is Transmembrane protein 25 (Mus musculus (Mouse)).